The primary structure comprises 585 residues: Putative indole-3-acetic acid-amido synthetase GH3.9 (585 aa).

Belongs to the IAA-amido conjugating enzyme family.

Catalyzes the synthesis of indole-3-acetic acid (IAA)-amino acid conjugates, providing a mechanism for the plant to cope with the presence of excess auxin. The polypeptide is Putative indole-3-acetic acid-amido synthetase GH3.9 (GH3.9) (Arabidopsis thaliana (Mouse-ear cress)).